Consider the following 790-residue polypeptide: Pleckstrin homology domain-containing family G member 6 (790 aa).

Positions 63 to 91 (SGQARGLSPMRLRDPEPEKRHGGHVGAGL) are disordered. A compositionally biased stretch (basic and acidic residues) spans 73–82 (RLRDPEPEKR). The region spanning 161-353 (HQQEALWELL…ESFLRHINGQ (193 aa)) is the DH domain. The region spanning 409 to 509 (QLLLEGPVRV…WLEKTQQAQA (101 aa)) is the PH domain. Basic and acidic residues-rich tracts occupy residues 529–538 (LYRDQDRESP) and 625–635 (ELRDIPLRPHP). Disordered stretches follow at residues 529-677 (LYRD…ASER), 690-730 (LRGQ…HTSL), and 748-790 (SQRI…ASEV). Basic and acidic residues predominate over residues 748-762 (SQRIEGAEEPRDSRP).

In terms of assembly, interacts with MYH10. Interacts with ELMO1 and EZR (in an open conformation). Interacts with CSPP1. As to expression, highest expression in the placenta. Low levels in small intestine, lung, liver, kidney, thymus and heart.

It is found in the cell projection. The protein localises to the microvillus. It localises to the cytoplasm. The protein resides in the cytoskeleton. Its subcellular location is the spindle. It is found in the spindle pole. The protein localises to the cleavage furrow. Functionally, guanine nucleotide exchange factor activating the small GTPase RHOA, which, in turn, induces myosin filament formation. Also activates RHOG. Does not activate RAC1, or to a much lower extent than RHOA and RHOG. Part of a functional unit, involving PLEKHG6, MYH10 and RHOA, at the cleavage furrow to advance furrow ingression during cytokinesis. In epithelial cells, required for the formation of microvilli and membrane ruffles on the apical pole. Along with EZR, required for normal macropinocytosis. This Homo sapiens (Human) protein is Pleckstrin homology domain-containing family G member 6 (PLEKHG6).